The primary structure comprises 278 residues: Undecaprenyl-diphosphatase 2 (278 aa).

The next 7 helical transmembrane spans lie at 43-63 (GAAF…VYFW), 88-108 (ARLG…GLFF), 119-139 (LYIT…ADRI), 149-169 (LIWR…IPGV), 194-214 (FLLA…KSIG), 226-246 (LATL…LKLV), and 254-274 (FVWY…TGVI).

This sequence belongs to the UppP family.

It localises to the cell inner membrane. It catalyses the reaction di-trans,octa-cis-undecaprenyl diphosphate + H2O = di-trans,octa-cis-undecaprenyl phosphate + phosphate + H(+). Its function is as follows. Catalyzes the dephosphorylation of undecaprenyl diphosphate (UPP). Confers resistance to bacitracin. The polypeptide is Undecaprenyl-diphosphatase 2 (Agrobacterium fabrum (strain C58 / ATCC 33970) (Agrobacterium tumefaciens (strain C58))).